We begin with the raw amino-acid sequence, 426 residues long: Histidine--tRNA ligase (426 aa).

This sequence belongs to the class-II aminoacyl-tRNA synthetase family. In terms of assembly, homodimer.

Its subcellular location is the cytoplasm. It carries out the reaction tRNA(His) + L-histidine + ATP = L-histidyl-tRNA(His) + AMP + diphosphate + H(+). The sequence is that of Histidine--tRNA ligase from Pseudoalteromonas translucida (strain TAC 125).